A 156-amino-acid chain; its full sequence is Cyanate hydratase (156 aa).

Residues Arg96, Glu99, and Ser122 contribute to the active site.

It belongs to the cyanase family.

It carries out the reaction cyanate + hydrogencarbonate + 3 H(+) = NH4(+) + 2 CO2. Functionally, catalyzes the reaction of cyanate with bicarbonate to produce ammonia and carbon dioxide. The chain is Cyanate hydratase from Burkholderia ambifaria (strain MC40-6).